The chain runs to 271 residues: MTIKEELGQPQSHSIELDEVSKEAASTRAALTSNLSGRFDQYPTKKGDFAIDGYLLDYSSPKQGCWVDGITVYGDIYIGKQNWGTYTRPVFAYLQYVETISIPQNVTTTLSYQLTKGHTRSFETSVNAKYSVGANIDIVNVGSEISTGFTRSESWSTTQSFTDTTEMKGPGTFVIYQVVLVYAHNATSAGRQNANAFAYSKTQAVGSRVDLYYLSAITQRKRVIVPSSNAVTPLDWDTVQRNVLMENYNPGSNSGHFSFDWSAYNDPHRRY.

A propeptide spanning residues 1 to 33 is cleaved from the precursor; the sequence is MTIKEELGQPQSHSIELDEVSKEAASTRAALTS. The segment at 102–170 is pore-forming domain; it reads IPQNVTTTLS…FTDTTEMKGP (69 aa).

As to quaternary structure, pro-Monalysin forms a stable donut-like 18-mer complex composed of two disk-shaped nonamers held together by N-terminal swapping of the pro-peptides. After proteolytic cleavage, the inactive 18-mer complex probably dissociates into two disk-shaped active nonamers in which the transmembrane segments are unmasked and ready to engage the conformational change leading to the pore formation into the target membrane. Multimerizes into circular-like structures and barrel-like aggregates. In terms of processing, requires N-terminal cleavage to become fully active. The metalloprotease AprA can induce the rapid cleavage of pro-Monalysin into its active form. Can also be processed by trypsin.

It is found in the secreted. The protein localises to the host cell membrane. Its function is as follows. Pore-forming toxin that contributes to the virulence of P.entomophila against Drosophila, playing an important role in host intestinal damage and lethality. Displays cytolytic and hemolytic activity. The protein is Monalysin of Pseudomonas entomophila (strain L48).